Consider the following 317-residue polypeptide: MTCKIIGCGGYLPSKIVSNDELAKFVETNDEWIRTRSGISQRHIADDNEYTSHLALKSAEQAIADARVSANDVDLIITCTTTSDNSFPSVATKLHGYLGLTNIPSFDLQAVCAGFVYGLQVADSLIASGKYKTILLIGAEKMTSLLDWNDRSTCVLFGDGAGSVILQRSSDDSGLIDSNIFSSGADYEILYTSGGISMNGTSGKIIMQGQKLFRHAIEKMQQSIEDLLHTNQFSVSGIDYFIPHQANIRIINKLAELLNIEEHKVVKTVEKHANCSAASIPLALSTLKASGKIKKGDILLFSAIGAGLTWGSALIRW.

Active-site residues include C112 and H244. The tract at residues Q245–R249 is ACP-binding. The active site involves N274.

Belongs to the thiolase-like superfamily. FabH family. As to quaternary structure, homodimer.

Its subcellular location is the cytoplasm. The enzyme catalyses malonyl-[ACP] + acetyl-CoA + H(+) = 3-oxobutanoyl-[ACP] + CO2 + CoA. It functions in the pathway lipid metabolism; fatty acid biosynthesis. Catalyzes the condensation reaction of fatty acid synthesis by the addition to an acyl acceptor of two carbons from malonyl-ACP. Catalyzes the first condensation reaction which initiates fatty acid synthesis and may therefore play a role in governing the total rate of fatty acid production. Possesses both acetoacetyl-ACP synthase and acetyl transacylase activities. Its substrate specificity determines the biosynthesis of branched-chain and/or straight-chain of fatty acids. The polypeptide is Beta-ketoacyl-[acyl-carrier-protein] synthase III (Rickettsia akari (strain Hartford)).